The following is a 558-amino-acid chain: Dihydroxy-acid dehydratase (558 aa).

D78 is a binding site for Mg(2+). Position 119 (C119) interacts with [2Fe-2S] cluster. D120 and K121 together coordinate Mg(2+). K121 bears the N6-carboxylysine mark. Residue C192 coordinates [2Fe-2S] cluster. E446 contributes to the Mg(2+) binding site. S472 acts as the Proton acceptor in catalysis.

Belongs to the IlvD/Edd family. In terms of assembly, homodimer. [2Fe-2S] cluster serves as cofactor. Requires Mg(2+) as cofactor.

It carries out the reaction (2R)-2,3-dihydroxy-3-methylbutanoate = 3-methyl-2-oxobutanoate + H2O. The enzyme catalyses (2R,3R)-2,3-dihydroxy-3-methylpentanoate = (S)-3-methyl-2-oxopentanoate + H2O. It functions in the pathway amino-acid biosynthesis; L-isoleucine biosynthesis; L-isoleucine from 2-oxobutanoate: step 3/4. Its pathway is amino-acid biosynthesis; L-valine biosynthesis; L-valine from pyruvate: step 3/4. Functions in the biosynthesis of branched-chain amino acids. Catalyzes the dehydration of (2R,3R)-2,3-dihydroxy-3-methylpentanoate (2,3-dihydroxy-3-methylvalerate) into 2-oxo-3-methylpentanoate (2-oxo-3-methylvalerate) and of (2R)-2,3-dihydroxy-3-methylbutanoate (2,3-dihydroxyisovalerate) into 2-oxo-3-methylbutanoate (2-oxoisovalerate), the penultimate precursor to L-isoleucine and L-valine, respectively. The sequence is that of Dihydroxy-acid dehydratase from Campylobacter lari (strain RM2100 / D67 / ATCC BAA-1060).